Consider the following 553-residue polypeptide: Phospholipase-B 81 (553 aa).

An N-terminal signal peptide occupies residues 1–35 (MVRFGSAASSDNRRRRCWSWYWGGLLLLWAVAETR). N69, N313, N416, and N531 each carry an N-linked (GlcNAc...) asparagine glycan.

This sequence belongs to the phospholipase B-like family. In terms of tissue distribution, expressed by the venom gland.

It localises to the secreted. In terms of biological role, may cause hemolysis. The chain is Phospholipase-B 81 from Drysdalia coronoides (White-lipped snake).